A 353-amino-acid polypeptide reads, in one-letter code: Phosphate acyltransferase (353 aa).

Belongs to the PlsX family. Homodimer. Probably interacts with PlsY.

It is found in the cytoplasm. The catalysed reaction is a fatty acyl-[ACP] + phosphate = an acyl phosphate + holo-[ACP]. It participates in lipid metabolism; phospholipid metabolism. In terms of biological role, catalyzes the reversible formation of acyl-phosphate (acyl-PO(4)) from acyl-[acyl-carrier-protein] (acyl-ACP). This enzyme utilizes acyl-ACP as fatty acyl donor, but not acyl-CoA. The polypeptide is Phosphate acyltransferase (Syntrophobacter fumaroxidans (strain DSM 10017 / MPOB)).